The chain runs to 131 residues: Fluoride-specific ion channel FluC (131 aa).

3 consecutive transmembrane segments (helical) span residues 3-23 (AAANLPAFLAVGAGAALGAWL), 34-54 (IFLTIPFGTLAANLLGGLLMG), and 62-82 (AVPAMSPVLKLLLTTGFLGGL). Na(+) is bound by residues Gly80 and Thr83. The helical transmembrane segment at 101-121 (WGWLALHAAVHVAGSLLMAWI) threads the bilayer.

It belongs to the fluoride channel Fluc/FEX (TC 1.A.43) family.

The protein localises to the cell inner membrane. The enzyme catalyses fluoride(in) = fluoride(out). With respect to regulation, na(+) is not transported, but it plays an essential structural role and its presence is essential for fluoride channel function. In terms of biological role, fluoride-specific ion channel. Important for reducing fluoride concentration in the cell, thus reducing its toxicity. The chain is Fluoride-specific ion channel FluC from Aromatoleum aromaticum (strain DSM 19018 / LMG 30748 / EbN1) (Azoarcus sp. (strain EbN1)).